A 481-amino-acid polypeptide reads, in one-letter code: Cobyric acid synthase (481 aa).

One can recognise a GATase cobBQ-type domain in the interval 249 to 436 (GLHIVCLRLS…LHGMFRDDAF (188 aa)). Residue cysteine 331 is the Nucleophile of the active site. The active site involves histidine 428.

It belongs to the CobB/CobQ family. CobQ subfamily.

Its pathway is cofactor biosynthesis; adenosylcobalamin biosynthesis. Catalyzes amidations at positions B, D, E, and G on adenosylcobyrinic A,C-diamide. NH(2) groups are provided by glutamine, and one molecule of ATP is hydrogenolyzed for each amidation. This is Cobyric acid synthase from Jannaschia sp. (strain CCS1).